A 379-amino-acid polypeptide reads, in one-letter code: 2-nitroimidazole nitrohydrolase (379 aa).

C357 acts as the Amidino-cysteine intermediate in catalysis.

It belongs to the arginine deiminase family.

It carries out the reaction 2-nitroimidazole + H2O = 1,3-dihydro-2H-imidazol-2-one + nitrite + H(+). Its function is as follows. Involved in the biodegradation of 2-Nitroimidazole (2NI) which is a natural antibiotic and an analog of the synthetic nitroimidazoles used for treatment of tuberculosis, Chagas disease (also called American Trypanosomiasis) and cancer. Catalyzes the hydrolytic denitration of 2NI to produce imidazol-2-one and nitrite. It is also active against the 2NI synthetic derivative benznidazole. NnhA confers drug resistance to 2NI. The chain is 2-nitroimidazole nitrohydrolase (nnhA) from Mycobacterium sp. (strain JS330).